A 273-amino-acid polypeptide reads, in one-letter code: Glutamate 5-kinase (273 aa).

K15 contributes to the ATP binding site. The substrate site is built by S55, D142, and N158. Residues 178-179 (SD) and 220-226 (TGGMLSK) contribute to the ATP site.

The protein belongs to the glutamate 5-kinase family.

The protein localises to the cytoplasm. The enzyme catalyses L-glutamate + ATP = L-glutamyl 5-phosphate + ADP. The protein operates within amino-acid biosynthesis; L-proline biosynthesis; L-glutamate 5-semialdehyde from L-glutamate: step 1/2. Catalyzes the transfer of a phosphate group to glutamate to form L-glutamate 5-phosphate. The chain is Glutamate 5-kinase from Streptococcus pyogenes serotype M1.